The primary structure comprises 55 residues: ATP synthase protein 8 (55 aa).

A helical transmembrane segment spans residues 6 to 26 (PHPWFAILVFSWIFFLVILPK).

It belongs to the ATPase protein 8 family. As to quaternary structure, F-type ATPases have 2 components, CF(1) - the catalytic core - and CF(0) - the membrane proton channel.

It localises to the mitochondrion membrane. Its function is as follows. Mitochondrial membrane ATP synthase (F(1)F(0) ATP synthase or Complex V) produces ATP from ADP in the presence of a proton gradient across the membrane which is generated by electron transport complexes of the respiratory chain. F-type ATPases consist of two structural domains, F(1) - containing the extramembraneous catalytic core and F(0) - containing the membrane proton channel, linked together by a central stalk and a peripheral stalk. During catalysis, ATP synthesis in the catalytic domain of F(1) is coupled via a rotary mechanism of the central stalk subunits to proton translocation. Part of the complex F(0) domain. Minor subunit located with subunit a in the membrane. The polypeptide is ATP synthase protein 8 (MT-ATP8) (Squalus acanthias (Spiny dogfish)).